The chain runs to 253 residues: Imidazole glycerol phosphate synthase subunit HisF (253 aa).

Catalysis depends on residues D11 and D130.

This sequence belongs to the HisA/HisF family. As to quaternary structure, heterodimer of HisH and HisF.

Its subcellular location is the cytoplasm. It carries out the reaction 5-[(5-phospho-1-deoxy-D-ribulos-1-ylimino)methylamino]-1-(5-phospho-beta-D-ribosyl)imidazole-4-carboxamide + L-glutamine = D-erythro-1-(imidazol-4-yl)glycerol 3-phosphate + 5-amino-1-(5-phospho-beta-D-ribosyl)imidazole-4-carboxamide + L-glutamate + H(+). It participates in amino-acid biosynthesis; L-histidine biosynthesis; L-histidine from 5-phospho-alpha-D-ribose 1-diphosphate: step 5/9. In terms of biological role, IGPS catalyzes the conversion of PRFAR and glutamine to IGP, AICAR and glutamate. The HisF subunit catalyzes the cyclization activity that produces IGP and AICAR from PRFAR using the ammonia provided by the HisH subunit. The polypeptide is Imidazole glycerol phosphate synthase subunit HisF (Geotalea daltonii (strain DSM 22248 / JCM 15807 / FRC-32) (Geobacter daltonii)).